We begin with the raw amino-acid sequence, 404 residues long: S-adenosylmethionine synthase (404 aa).

An ATP-binding site is contributed by histidine 18. Aspartate 20 is a binding site for Mg(2+). Position 46 (glutamate 46) interacts with K(+). L-methionine-binding residues include glutamate 59 and glutamine 102. Residues 102 to 112 (QSPEIAQGVDH) form a flexible loop region. ATP is bound by residues 178 to 180 (DGK), 249 to 250 (KF), aspartate 258, 264 to 265 (RK), alanine 281, and lysine 285. Aspartate 258 serves as a coordination point for L-methionine. Residue lysine 289 coordinates L-methionine.

It belongs to the AdoMet synthase family. Homotetramer; dimer of dimers. Mg(2+) serves as cofactor. K(+) is required as a cofactor.

Its subcellular location is the cytoplasm. The catalysed reaction is L-methionine + ATP + H2O = S-adenosyl-L-methionine + phosphate + diphosphate. The protein operates within amino-acid biosynthesis; S-adenosyl-L-methionine biosynthesis; S-adenosyl-L-methionine from L-methionine: step 1/1. In terms of biological role, catalyzes the formation of S-adenosylmethionine (AdoMet) from methionine and ATP. The overall synthetic reaction is composed of two sequential steps, AdoMet formation and the subsequent tripolyphosphate hydrolysis which occurs prior to release of AdoMet from the enzyme. The polypeptide is S-adenosylmethionine synthase (Rhodococcus jostii (strain RHA1)).